A 1168-amino-acid chain; its full sequence is Myosin IC heavy chain (1168 aa).

Positions 7-666 (HGVDDMVMLT…SVFSLEELRD (660 aa)) constitute a Myosin motor domain. 101 to 108 (GESGAGKT) contacts ATP. S311 carries the post-translational modification Phosphoserine. The interval 542 to 564 (INILVATLSKCTPHYIRCIKPNE) is actin-binding. One can recognise a TH1 domain in the interval 704–892 (KERRRLSLER…KVSVAPGLPP (189 aa)). Disordered regions lie at residues 876 to 909 (DGKVKGTKVSVAPGLPPSSAPNIQAPQETSGGAS), 921 to 978 (ILGA…APGP), and 1036 to 1168 (AAAP…PPGM). A compositionally biased stretch (polar residues) spans 895 to 909 (APNIQAPQETSGGAS). 2 stretches are compositionally biased toward gly residues: residues 924-939 (AKGGGGGGGRGRGGPS) and 950-959 (PGGGGGGPSP). Positions 960–978 (FGGRPSPSGPPAAASAPGP) are enriched in low complexity. One can recognise an SH3 domain in the interval 976–1035 (PGPEQARALYDFAAENPDELTFNEGAVVTVINKSNPDWWEGELNGQRGVFPASYVELIPR). The span at 1040–1052 (APGPSGGPRPAPP) shows a compositional bias: pro residues. Gly residues-rich tracts occupy residues 1063–1083 (GGPGPMRGRGGPAPGGPGRGG) and 1090–1099 (GRAGPPGGRG). A compositionally biased stretch (low complexity) spans 1100-1112 (MPAPGGAAPRGRG). A compositionally biased stretch (gly residues) spans 1120–1141 (GPPGGGRGGAPPPGGMRGRGGP). The segment covering 1152 to 1161 (GGMMPPRGRA) has biased composition (low complexity).

This sequence belongs to the TRAFAC class myosin-kinesin ATPase superfamily. Myosin family. As to quaternary structure, myosin I heavy chain is single-headed. Dimer of a heavy and a light chain. Inability to self-assemble into filaments.

Myosin is a protein that binds to F-actin and has ATPase activity that is activated by F-actin. In Acanthamoeba castellanii (Amoeba), this protein is Myosin IC heavy chain (MIC).